The chain runs to 323 residues: Methionyl-tRNA formyltransferase (323 aa).

117–120 (SLLP) is a binding site for (6S)-5,6,7,8-tetrahydrofolate.

It belongs to the Fmt family.

The catalysed reaction is L-methionyl-tRNA(fMet) + (6R)-10-formyltetrahydrofolate = N-formyl-L-methionyl-tRNA(fMet) + (6S)-5,6,7,8-tetrahydrofolate + H(+). In terms of biological role, attaches a formyl group to the free amino group of methionyl-tRNA(fMet). The formyl group appears to play a dual role in the initiator identity of N-formylmethionyl-tRNA by promoting its recognition by IF2 and preventing the misappropriation of this tRNA by the elongation apparatus. In Albidiferax ferrireducens (strain ATCC BAA-621 / DSM 15236 / T118) (Rhodoferax ferrireducens), this protein is Methionyl-tRNA formyltransferase.